The following is a 196-amino-acid chain: ATP-dependent Clp protease proteolytic subunit 1 (196 aa).

The active-site Nucleophile is S96. H121 is an active-site residue.

It belongs to the peptidase S14 family. As to quaternary structure, fourteen ClpP subunits assemble into 2 heptameric rings which stack back to back to give a disk-like structure with a central cavity, resembling the structure of eukaryotic proteasomes.

It localises to the cytoplasm. It catalyses the reaction Hydrolysis of proteins to small peptides in the presence of ATP and magnesium. alpha-casein is the usual test substrate. In the absence of ATP, only oligopeptides shorter than five residues are hydrolyzed (such as succinyl-Leu-Tyr-|-NHMec, and Leu-Tyr-Leu-|-Tyr-Trp, in which cleavage of the -Tyr-|-Leu- and -Tyr-|-Trp bonds also occurs).. Its function is as follows. Cleaves peptides in various proteins in a process that requires ATP hydrolysis. Has a chymotrypsin-like activity. Plays a major role in the degradation of misfolded proteins. The chain is ATP-dependent Clp protease proteolytic subunit 1 from Prochlorococcus marinus (strain SARG / CCMP1375 / SS120).